A 353-amino-acid polypeptide reads, in one-letter code: GTPase Obg (353 aa).

Residues 1–159 (MKFLDEAKVY…RWIWLRLKLI (159 aa)) enclose the Obg domain. Residues 160–327 (ADAGLVGLPN…ALRALAAVIG (168 aa)) form the OBG-type G domain. GTP-binding positions include 166–173 (GLPNAGKS), 191–195 (FTTLH), 212–215 (DIPG), 279–282 (NKID), and 308–310 (SGV). Positions 173 and 193 each coordinate Mg(2+).

It belongs to the TRAFAC class OBG-HflX-like GTPase superfamily. OBG GTPase family. In terms of assembly, monomer. It depends on Mg(2+) as a cofactor.

The protein localises to the cytoplasm. An essential GTPase which binds GTP, GDP and possibly (p)ppGpp with moderate affinity, with high nucleotide exchange rates and a fairly low GTP hydrolysis rate. Plays a role in control of the cell cycle, stress response, ribosome biogenesis and in those bacteria that undergo differentiation, in morphogenesis control. This chain is GTPase Obg, found in Rhodopseudomonas palustris (strain BisB5).